We begin with the raw amino-acid sequence, 353 residues long: 3'-5' exonuclease (353 aa).

The disordered stretch occupies residues 1-119 (MEKYLTKMPI…PSPEKEKPEK (119 aa)). Basic and acidic residues-rich tracts occupy residues 13–30 (KANE…ETPK) and 37–50 (KKDT…KENA). A compositionally biased stretch (basic residues) spans 59 to 70 (TKGRPGRPAAKR). Positions 71–90 (KNLDTPDVTEKLAMEEENPP) are enriched in basic and acidic residues. A phosphoserine mark is found at Ser-103, Ser-109, and Ser-111. The 169-residue stretch at 145–313 (VLQWVEKQKD…GQVIYRELER (169 aa)) folds into the 3'-5' exonuclease domain. 3 residues coordinate Mg(2+): Asp-162, Glu-164, and Asp-300.

Belongs to the WRNexo family.

It is found in the nucleus. In terms of biological role, has exonuclease activity on both single-stranded and duplex templates bearing overhangs, but not blunt ended duplex DNA, and cleaves in a 3'-5' direction. Essential for the formation of DNA replication focal centers. Has an important role in maintaining genome stability. This is 3'-5' exonuclease from Drosophila melanogaster (Fruit fly).